Here is a 761-residue protein sequence, read N- to C-terminus: 5-methyltetrahydropteroyltriglutamate--homocysteine methyltransferase (761 aa).

5-methyltetrahydropteroyltri-L-glutamate contacts are provided by residues 16–19 (RELK) and lysine 116. L-homocysteine-binding positions include 437 to 439 (IGS) and glutamate 490. Residues 437–439 (IGS) and glutamate 490 each bind L-methionine. Residues 521–522 (RC) and tryptophan 567 each bind 5-methyltetrahydropteroyltri-L-glutamate. Residue aspartate 605 participates in L-homocysteine binding. An L-methionine-binding site is contributed by aspartate 605. Glutamate 611 contributes to the 5-methyltetrahydropteroyltri-L-glutamate binding site. Histidine 647, cysteine 649, and glutamate 671 together coordinate Zn(2+). Histidine 700 serves as the catalytic Proton donor. Cysteine 732 contributes to the Zn(2+) binding site.

Belongs to the vitamin-B12 independent methionine synthase family. Requires Zn(2+) as cofactor.

The enzyme catalyses 5-methyltetrahydropteroyltri-L-glutamate + L-homocysteine = tetrahydropteroyltri-L-glutamate + L-methionine. It participates in amino-acid biosynthesis; L-methionine biosynthesis via de novo pathway; L-methionine from L-homocysteine (MetE route): step 1/1. In terms of biological role, catalyzes the transfer of a methyl group from 5-methyltetrahydrofolate to homocysteine resulting in methionine formation. The sequence is that of 5-methyltetrahydropteroyltriglutamate--homocysteine methyltransferase from Chromohalobacter salexigens (strain ATCC BAA-138 / DSM 3043 / CIP 106854 / NCIMB 13768 / 1H11).